Consider the following 625-residue polypeptide: MESSYVVFILLSLILLPNHSLWLASANLEGDALHTLRVTLVDPNNVLQSWDPTLVNPCTWFHVTCNNENSVIRVDLGNAELSGHLVPELGVLKNLQYLELYSNNITGPIPSNLGNLTNLVSLDLYLNSFSGPIPESLGKLSKLRFLRLNNNSLTGSIPMSLTNITTLQVLDLSNNRLSGSVPDNGSFSLFTPISFANNLDLCGPVTSHPCPGSPPFSPPPPFIQPPPVSTPSGYGITGAIAGGVAAGAALLFAAPAIAFAWWRRRKPLDIFFDVPAEEDPEVHLGQLKRFSLRELQVASDGFSNKNILGRGGFGKVYKGRLADGTLVAVKRLKEERTPGGELQFQTEVEMISMAVHRNLLRLRGFCMTPTERLLVYPYMANGSVASCLRERPPSQPPLDWPTRKRIALGSARGLSYLHDHCDPKIIHRDVKAANILLDEEFEAVVGDFGLAKLMDYKDTHVTTAVRGTIGHIAPEYLSTGKSSEKTDVFGYGIMLLELITGQRAFDLARLANDDDVMLLDWVKGLLKEKKLEMLVDPDLQTNYEERELEQVIQVALLCTQGSPMERPKMSEVVRMLEGDGLAEKWDEWQKVEILREEIDLSPNPNSDWILDSTYNLHAVELSGPR.

The signal sequence occupies residues 1–26 (MESSYVVFILLSLILLPNHSLWLASA). The Extracellular segment spans residues 27-238 (NLEGDALHTL…STPSGYGITG (212 aa)). Cys58 and Cys65 are oxidised to a cystine. Leucine-rich repeat receptor-like protein kinase binding regions lie at residues 59 to 78 (TWFHVTCNNENSVIRVDLGN) and 97 to 102 (YLELYS). 61–62 (FH) contacts brassinolide. LRR repeat units follow at residues 92-116 (LKNLQYLELYSNNITGPIPSNLGNL), 118-140 (NLVSLDLYLNSFSGPIPESLGKL), 141-164 (SKLRFLRLNNNSLTGSIPMSLTNI), and 165-189 (TTLQVLDLSNNRLSGSVPDNGSFSL). Residues Asn104 and Asn115 are each glycosylated (N-linked (GlcNAc...) asparagine). 2 leucine-rich repeat receptor-like protein kinase binding regions span residues 123 to 126 (DLYL) and 145 to 147 (FLR). N-linked (GlcNAc...) asparagine glycosylation is found at Asn150, Asn163, and Asn184. The tract at residues 171 to 194 (DLSNNRLSGSVPDNGSFSLFTPIS) is leucine-rich repeat receptor-like protein kinase binding. A disulfide bridge connects residues Cys202 and Cys210. The helical transmembrane segment at 239 to 259 (AIAGGVAAGAALLFAAPAIAF) threads the bilayer. Residues 260–625 (AWWRRRKPLD…LHAVELSGPR (366 aa)) lie on the Cytoplasmic side of the membrane. Phosphoserine is present on residues Ser291, Ser299, and Ser303. The Protein kinase domain maps to 302 to 589 (FSNKNILGRG…GLAEKWDEWQ (288 aa)). 308–316 (LGRGGFGKV) is an ATP binding site. Position 325 is a phosphothreonine (Thr325). Lys330 provides a ligand contact to ATP. 2 positions are modified to phosphothreonine: Thr337 and Thr346. 4 positions are modified to phosphoserine: Ser352, Ser383, Ser386, and Ser394. Thr402 bears the Phosphothreonine mark. Ser415 is modified (phosphoserine). The active-site Proton acceptor is Asp429. Tyr456 is subject to Phosphotyrosine. A phosphothreonine mark is found at Thr459, Thr462, Thr463, and Thr468. Tyr476 carries the post-translational modification Phosphotyrosine. Ser478 is subject to Phosphoserine. Residue Thr479 is modified to Phosphothreonine. Ser483 bears the Phosphoserine mark. Thr541 is subject to Phosphothreonine. At Tyr543 the chain carries Phosphotyrosine. Position 559 is a phosphothreonine (Thr559). A phosphoserine mark is found at Ser606 and Ser612. Residue Thr613 is modified to Phosphothreonine. Tyr614 is modified (phosphotyrosine). Phosphoserine is present on Ser622.

Belongs to the protein kinase superfamily. Ser/Thr protein kinase family. As to quaternary structure, monomer, homo- and heterodimer. Interacts with KAPP, CDC48A, GRF6 or GRF7, SERK2, BRI1 and SERK3/BAK1 to form the SERK1 signaling complex. Bind to BRI1 in a brassinolide-dependent manner. Heterodimer with PSKR1. Interacts with the EF-Tu receptor EFR and FLS2 in a specific ligand-induced manner. Interacts with ERECTA in a EPF2-induced manner. Interacts with ERL1 in a EPF1-induced manner. Interacts with TMM. In the presence of the signal peptide RGF1, interacts with RGI1/RGFR4/RCH2, RGI2/RGFR3/RCH1, RGI3/RGFR1, RGI4/RGFR2/SKM2 and RGI5/RGFR5. The cofactor is Mg(2+). Post-translationally, glycosylated. Important for targeting to the plasma membrane. Intermolecular autophosphorylation. The catalytic activity of SERK1 depends on the presence of a phosphorylated Thr residue in SERK1. The phosphorylation is induced by brassinosteroids. Transphosphorylation by BRI1 occurs only on Ser-299 and Thr-462. Dephosphorylation of threonine residues by the kinase-associated protein phosphatase (KAPP) is involved in SERK1 endocytosis. As to expression, expressed in flowers, tapetum, developing microspores, all cells of the embryo sac, provascular strands and developing vascular bundles. Low expression in adult vascular tissue. Detected in root meristem.

It is found in the cell membrane. The protein localises to the endoplasmic reticulum membrane. It catalyses the reaction L-seryl-[protein] + ATP = O-phospho-L-seryl-[protein] + ADP + H(+). It carries out the reaction L-threonyl-[protein] + ATP = O-phospho-L-threonyl-[protein] + ADP + H(+). The enzyme catalyses L-tyrosyl-[protein] + ATP = O-phospho-L-tyrosyl-[protein] + ADP + H(+). With respect to regulation, inhibited by manganese. Functionally, dual specificity kinase acting on both serine/threonine- and tyrosine-containing substrates. Phosphorylates BRI1 on 'Ser-887' and CDC48 on at least one threonine residue and on 'Ser-41'. Confers embryogenic competence. Acts redundantly with SERK2 as a control point for sporophytic development controlling male gametophyte production. Involved in the brassinolide signaling pathway. Probably required during small peptide (e.g. RGF1) signaling. Involved in the perception of phytosulfokine and subsequent signal transduction. Acts as a RLK5 coreceptor and promotes high-affinity IDA sensing, thus being a positive regulator of floral abscission. The polypeptide is Somatic embryogenesis receptor kinase 1 (Arabidopsis thaliana (Mouse-ear cress)).